We begin with the raw amino-acid sequence, 324 residues long: DNA-directed RNA polymerase subunit alpha (324 aa).

An alpha N-terminal domain (alpha-NTD) region spans residues 1 to 230 (MQSSGLLKPR…EQLSVFADLE (230 aa)). Residues 244–324 (VDPVLLRPVD…NWPPAGLEKA (81 aa)) form an alpha C-terminal domain (alpha-CTD) region.

Belongs to the RNA polymerase alpha chain family. As to quaternary structure, homodimer. The RNAP catalytic core consists of 2 alpha, 1 beta, 1 beta' and 1 omega subunit. When a sigma factor is associated with the core the holoenzyme is formed, which can initiate transcription.

The enzyme catalyses RNA(n) + a ribonucleoside 5'-triphosphate = RNA(n+1) + diphosphate. Functionally, DNA-dependent RNA polymerase catalyzes the transcription of DNA into RNA using the four ribonucleoside triphosphates as substrates. The polypeptide is DNA-directed RNA polymerase subunit alpha (Dechloromonas aromatica (strain RCB)).